The following is a 571-amino-acid chain: Urease subunit alpha (571 aa).

In terms of domain architecture, Urease spans 132–571 (GGIDSHIHFI…LPMAQRYFLF (440 aa)). 3 residues coordinate Ni(2+): His137, His139, and Lys220. The residue at position 220 (Lys220) is an N6-carboxylysine. His222 lines the substrate pocket. Residues His249 and His275 each contribute to the Ni(2+) site. The Proton donor role is filled by His323. A Ni(2+)-binding site is contributed by Asp363.

It belongs to the metallo-dependent hydrolases superfamily. Urease alpha subunit family. In terms of assembly, heterotrimer of UreA (gamma), UreB (beta) and UreC (alpha) subunits. Three heterotrimers associate to form the active enzyme. It depends on Ni cation as a cofactor. Post-translationally, carboxylation allows a single lysine to coordinate two nickel ions.

Its subcellular location is the cytoplasm. The enzyme catalyses urea + 2 H2O + H(+) = hydrogencarbonate + 2 NH4(+). The protein operates within nitrogen metabolism; urea degradation; CO(2) and NH(3) from urea (urease route): step 1/1. This chain is Urease subunit alpha, found in Kocuria rhizophila (strain ATCC 9341 / DSM 348 / NBRC 103217 / DC2201).